The following is an 88-amino-acid chain: MIKNSFISLQEKKDESRGSVEFQVFSFTNKIRRLTSHLELHRKDYLSQRGLRKILGKRQRLLVYLSKKNRVRYKELIHKLNIRQLKTR.

Belongs to the universal ribosomal protein uS15 family. Part of the 30S ribosomal subunit.

It localises to the plastid. It is found in the chloroplast. The polypeptide is Small ribosomal subunit protein uS15c (rps15) (Aethionema cordifolium (Lebanon stonecress)).